The primary structure comprises 123 residues: MKKLTSENSHRQQKVASIINEALIEILHRGKMLDPRLYDCPLTITKIIVTADLKIANCYFLPFNTKLTPQEITESLNNSKNAIRNFVTGKINMKYSPDIRFHYDHGFDNALKVEQLLKDTNNI.

This sequence belongs to the RbfA family. Monomer. Binds 30S ribosomal subunits, but not 50S ribosomal subunits or 70S ribosomes.

It localises to the cytoplasm. Functionally, one of several proteins that assist in the late maturation steps of the functional core of the 30S ribosomal subunit. Associates with free 30S ribosomal subunits (but not with 30S subunits that are part of 70S ribosomes or polysomes). Required for efficient processing of 16S rRNA. May interact with the 5'-terminal helix region of 16S rRNA. The polypeptide is Ribosome-binding factor A (Rickettsia bellii (strain OSU 85-389)).